Reading from the N-terminus, the 550-residue chain is Glucose-6-phosphate isomerase (550 aa).

Catalysis depends on Glu356, which acts as the Proton donor. Residues His387 and Lys515 contribute to the active site.

This sequence belongs to the GPI family.

Its subcellular location is the cytoplasm. It catalyses the reaction alpha-D-glucose 6-phosphate = beta-D-fructose 6-phosphate. Its pathway is carbohydrate biosynthesis; gluconeogenesis. It functions in the pathway carbohydrate degradation; glycolysis; D-glyceraldehyde 3-phosphate and glycerone phosphate from D-glucose: step 2/4. Its function is as follows. Catalyzes the reversible isomerization of glucose-6-phosphate to fructose-6-phosphate. In Photobacterium profundum (strain SS9), this protein is Glucose-6-phosphate isomerase.